The chain runs to 347 residues: S-adenosylmethionine:tRNA ribosyltransferase-isomerase (347 aa).

This sequence belongs to the QueA family. In terms of assembly, monomer.

It is found in the cytoplasm. It catalyses the reaction 7-aminomethyl-7-carbaguanosine(34) in tRNA + S-adenosyl-L-methionine = epoxyqueuosine(34) in tRNA + adenine + L-methionine + 2 H(+). Its pathway is tRNA modification; tRNA-queuosine biosynthesis. Its function is as follows. Transfers and isomerizes the ribose moiety from AdoMet to the 7-aminomethyl group of 7-deazaguanine (preQ1-tRNA) to give epoxyqueuosine (oQ-tRNA). The chain is S-adenosylmethionine:tRNA ribosyltransferase-isomerase from Ectopseudomonas mendocina (strain ymp) (Pseudomonas mendocina).